Reading from the N-terminus, the 325-residue chain is Small ribosomal subunit biogenesis GTPase RsgA (325 aa).

Residues 80–241 (LSKQIHIIAS…IIDTPGIKGF (162 aa)) enclose the CP-type G domain. Residues 129 to 132 (NKID) and 183 to 191 (GHSGVGKST) each bind GTP. 4 residues coordinate Zn(2+): Cys265, Cys270, His272, and Cys278.

This sequence belongs to the TRAFAC class YlqF/YawG GTPase family. RsgA subfamily. Monomer. Associates with 30S ribosomal subunit, binds 16S rRNA. It depends on Zn(2+) as a cofactor.

The protein resides in the cytoplasm. Its function is as follows. One of several proteins that assist in the late maturation steps of the functional core of the 30S ribosomal subunit. Helps release RbfA from mature subunits. May play a role in the assembly of ribosomal proteins into the subunit. Circularly permuted GTPase that catalyzes slow GTP hydrolysis, GTPase activity is stimulated by the 30S ribosomal subunit. This Flavobacterium johnsoniae (strain ATCC 17061 / DSM 2064 / JCM 8514 / BCRC 14874 / CCUG 350202 / NBRC 14942 / NCIMB 11054 / UW101) (Cytophaga johnsonae) protein is Small ribosomal subunit biogenesis GTPase RsgA.